The sequence spans 538 residues: Growth factor receptor-bound protein 14 (538 aa).

A disordered region spans residues 1–20; that stretch reads MTTSLQDGQSAAGRAGAQDS. Thr2 is modified (N-acetylthreonine). In terms of domain architecture, Ras-associating spans 104 to 190; that stretch reads KKQVIKVYSE…NKLYLRKNYA (87 aa). The 109-residue stretch at 232-340 folds into the PH domain; the sequence is YPEIHGFLHA…WVTAIRLLKD (109 aa). Phosphoserine is present on residues Ser370 and Ser373. The region spanning 437 to 533 is the SH2 domain; the sequence is WFHHRISRDE…VLPCKLKHYC (97 aa).

Belongs to the GRB7/10/14 family. In terms of assembly, interacts with the cytoplasmic domain of the autophosphorylated insulin receptor, through the SH2 domain. Interacts with GRB14 (via BPS domain); this interaction protects the tyrosines in the activation loop on INSR from dephosphorylation. Binds to the ankyrin repeat region of TNKS2 via its N-terminus. Interacts with activated NRAS. Interacts (via SH2 domain) with TEK/TIE2 (tyrosine phosphorylated). Phosphorylated on serine residues. Phosphorylated on tyrosine residues by TEK/TIE2.

The protein localises to the cytoplasm. Its subcellular location is the endosome membrane. Its function is as follows. Adapter protein which modulates coupling of cell surface receptor kinases with specific signaling pathways. Binds to, and suppresses signals from, the activated insulin receptor (INSR). Potent inhibitor of insulin-stimulated MAPK3 phosphorylation. Plays a critical role regulating PDPK1 membrane translocation in response to insulin stimulation and serves as an adapter protein to recruit PDPK1 to activated insulin receptor, thus promoting PKB/AKT1 phosphorylation and transduction of the insulin signal. The protein is Growth factor receptor-bound protein 14 (Grb14) of Mus musculus (Mouse).